Consider the following 166-residue polypeptide: NAD(P)H-quinone oxidoreductase subunit I, chloroplastic (166 aa).

2 4Fe-4S ferredoxin-type domains span residues 55–84 (GRIH…VDWK) and 95–124 (LNYS…MTEE). Residues C64, C67, C70, C74, C104, C107, C110, and C114 each coordinate [4Fe-4S] cluster.

It belongs to the complex I 23 kDa subunit family. In terms of assembly, NDH is composed of at least 16 different subunits, 5 of which are encoded in the nucleus. It depends on [4Fe-4S] cluster as a cofactor.

It is found in the plastid. The protein localises to the chloroplast thylakoid membrane. The enzyme catalyses a plastoquinone + NADH + (n+1) H(+)(in) = a plastoquinol + NAD(+) + n H(+)(out). It carries out the reaction a plastoquinone + NADPH + (n+1) H(+)(in) = a plastoquinol + NADP(+) + n H(+)(out). In terms of biological role, NDH shuttles electrons from NAD(P)H:plastoquinone, via FMN and iron-sulfur (Fe-S) centers, to quinones in the photosynthetic chain and possibly in a chloroplast respiratory chain. The immediate electron acceptor for the enzyme in this species is believed to be plastoquinone. Couples the redox reaction to proton translocation, and thus conserves the redox energy in a proton gradient. The polypeptide is NAD(P)H-quinone oxidoreductase subunit I, chloroplastic (Perymeniopsis ovalifolia).